A 386-amino-acid polypeptide reads, in one-letter code: S-adenosylmethionine synthase (386 aa).

His14 contributes to the ATP binding site. A Mg(2+)-binding site is contributed by Asp16. Glu42 contacts K(+). Positions 55 and 98 each coordinate L-methionine. Residues 98 to 108 form a flexible loop region; the sequence is QSGDISQGVDG. ATP-binding positions include 162–164, 230–231, Asp239, 245–246, Ala262, and Lys266; these read DSK, RF, and RK. Asp239 contributes to the L-methionine binding site. Position 270 (Lys270) interacts with L-methionine.

The protein belongs to the AdoMet synthase family. As to quaternary structure, homotetramer; dimer of dimers. It depends on Mg(2+) as a cofactor. Requires K(+) as cofactor.

Its subcellular location is the cytoplasm. It carries out the reaction L-methionine + ATP + H2O = S-adenosyl-L-methionine + phosphate + diphosphate. The protein operates within amino-acid biosynthesis; S-adenosyl-L-methionine biosynthesis; S-adenosyl-L-methionine from L-methionine: step 1/1. Functionally, catalyzes the formation of S-adenosylmethionine (AdoMet) from methionine and ATP. The overall synthetic reaction is composed of two sequential steps, AdoMet formation and the subsequent tripolyphosphate hydrolysis which occurs prior to release of AdoMet from the enzyme. This chain is S-adenosylmethionine synthase, found in Salinibacter ruber (strain DSM 13855 / M31).